The primary structure comprises 301 residues: 2-methoxy-6-polyprenyl-1,4-benzoquinol methylase, mitochondrial (301 aa).

A mitochondrion-targeting transit peptide spans 1–16 (MQTTRSTRLLSLARRF). A compositionally biased stretch (polar residues) spans 20–31 (RTASQSAQNSKG). A disordered region spans residues 20 to 44 (RTASQSAQNSKGMASGAESISGKEK). Residues Thr111, Asp139, and 173-174 (DA) contribute to the S-adenosyl-L-methionine site.

This sequence belongs to the class I-like SAM-binding methyltransferase superfamily. MenG/UbiE family. In terms of assembly, component of a multi-subunit COQ enzyme complex.

It localises to the mitochondrion inner membrane. The enzyme catalyses a 2-methoxy-6-(all-trans-polyprenyl)benzene-1,4-diol + S-adenosyl-L-methionine = a 5-methoxy-2-methyl-3-(all-trans-polyprenyl)benzene-1,4-diol + S-adenosyl-L-homocysteine + H(+). The protein operates within cofactor biosynthesis; ubiquinone biosynthesis. Functionally, methyltransferase required for the conversion of 2-polyprenyl-6-methoxy-1,4-benzoquinol (DDMQH2) to 2-polyprenyl-3-methyl-6-methoxy-1,4-benzoquinol (DMQH2). In Drosophila melanogaster (Fruit fly), this protein is 2-methoxy-6-polyprenyl-1,4-benzoquinol methylase, mitochondrial.